A 295-amino-acid polypeptide reads, in one-letter code: Zygote arrest protein 1.S (295 aa).

Disordered regions lie at residues 80–115 (SVQC…TKTV) and 144–186 (EKGE…APAQ). Basic and acidic residues predominate over residues 144–176 (EKGEAVRSEGSEGGRQEGKQGDGEIKEQMKMDK). Residues 197 to 280 (KYGYYHCKDC…RQDLCGRCKG (84 aa)) form a 3CxxC-type zinc finger.

It belongs to the ZAR1 family. As to expression, ovary. Also expressed in lung and muscle.

It is found in the cytoplasm. Its subcellular location is the cytoplasmic ribonucleoprotein granule. Its function is as follows. mRNA-binding protein required for maternal mRNA storage, translation and degradation during oocyte maturation. Probably promotes formation of some phase-separated membraneless compartment that stores maternal mRNAs in oocytes: acts by undergoing liquid-liquid phase separation upon binding to maternal mRNAs. Binds to the 3'-UTR of maternal mRNAs in immature oocytes, inhibiting their translation. The polypeptide is Zygote arrest protein 1.S (zar1.S) (Xenopus laevis (African clawed frog)).